The chain runs to 166 residues: Large ribosomal subunit protein uL10 (166 aa).

Belongs to the universal ribosomal protein uL10 family. Part of the ribosomal stalk of the 50S ribosomal subunit. The N-terminus interacts with L11 and the large rRNA to form the base of the stalk. The C-terminus forms an elongated spine to which L12 dimers bind in a sequential fashion forming a multimeric L10(L12)X complex.

Forms part of the ribosomal stalk, playing a central role in the interaction of the ribosome with GTP-bound translation factors. This chain is Large ribosomal subunit protein uL10, found in Flavobacterium psychrophilum (strain ATCC 49511 / DSM 21280 / CIP 103535 / JIP02/86).